Consider the following 340-residue polypeptide: Guanine nucleotide-binding protein subunit beta-4 (340 aa).

Serine 2 bears the N-acetylserine mark. Serine 2 is subject to Phosphoserine. WD repeat units follow at residues glycine 53–alanine 92, leucine 95–arginine 134, glycine 141–threonine 179, glycine 182–serine 221, and glycine 224–leucine 263. The residue at position 266 (histidine 266) is a Phosphohistidine. WD repeat units lie at residues asparagine 268–valine 307 and glycine 310–tryptophan 339.

The protein belongs to the WD repeat G protein beta family. G proteins are composed of 3 units, alpha, beta and gamma. In terms of tissue distribution, widely expressed in the brain. Highest levels found in the hippocampus and layers v and vi of the neocortex.

Functionally, guanine nucleotide-binding proteins (G proteins) are involved as a modulator or transducer in various transmembrane signaling systems. The beta and gamma chains are required for the GTPase activity, for replacement of GDP by GTP, and for G protein-effector interaction. The polypeptide is Guanine nucleotide-binding protein subunit beta-4 (Gnb4) (Rattus norvegicus (Rat)).